A 442-amino-acid polypeptide reads, in one-letter code: UDP-N-acetylmuramoylalanine--D-glutamate ligase (442 aa).

Position 113–119 (113–119) interacts with ATP; it reads GSNGKTT.

The protein belongs to the MurCDEF family.

It localises to the cytoplasm. It carries out the reaction UDP-N-acetyl-alpha-D-muramoyl-L-alanine + D-glutamate + ATP = UDP-N-acetyl-alpha-D-muramoyl-L-alanyl-D-glutamate + ADP + phosphate + H(+). The protein operates within cell wall biogenesis; peptidoglycan biosynthesis. Cell wall formation. Catalyzes the addition of glutamate to the nucleotide precursor UDP-N-acetylmuramoyl-L-alanine (UMA). The sequence is that of UDP-N-acetylmuramoylalanine--D-glutamate ligase from Coxiella burnetii (strain CbuK_Q154) (Coxiella burnetii (strain Q154)).